The sequence spans 873 residues: Bifunctional uridylyltransferase/uridylyl-removing enzyme (873 aa).

Residues 1–332 (MAFQSPLTFN…NGGETEPAVI (332 aa)) are uridylyltransferase. The uridylyl-removing stretch occupies residues 333-692 (INEDFQRRGR…MSKKATRGGT (360 aa)). An HD domain is found at 451-573 (VDEHSVRLLN…VRDEERLEYL (123 aa)). 2 consecutive ACT domains span residues 693–773 (EVFV…VKTR) and 800–873 (LMEL…ELAP).

The protein belongs to the GlnD family. Requires Mg(2+) as cofactor.

The enzyme catalyses [protein-PII]-L-tyrosine + UTP = [protein-PII]-uridylyl-L-tyrosine + diphosphate. The catalysed reaction is [protein-PII]-uridylyl-L-tyrosine + H2O = [protein-PII]-L-tyrosine + UMP + H(+). Its activity is regulated as follows. Uridylyltransferase (UTase) activity is inhibited by glutamine, while glutamine activates uridylyl-removing (UR) activity. Its function is as follows. Modifies, by uridylylation and deuridylylation, the PII regulatory proteins (GlnB and homologs), in response to the nitrogen status of the cell that GlnD senses through the glutamine level. Under low glutamine levels, catalyzes the conversion of the PII proteins and UTP to PII-UMP and PPi, while under higher glutamine levels, GlnD hydrolyzes PII-UMP to PII and UMP (deuridylylation). Thus, controls uridylylation state and activity of the PII proteins, and plays an important role in the regulation of nitrogen assimilation and metabolism. The polypeptide is Bifunctional uridylyltransferase/uridylyl-removing enzyme (Vibrio vulnificus (strain YJ016)).